The sequence spans 407 residues: Probable succinyl-diaminopimelate desuccinylase (407 aa).

His72 provides a ligand contact to Zn(2+). The active site involves Asp74. Asp105 contributes to the Zn(2+) binding site. Glu139 (proton acceptor) is an active-site residue. Positions 140, 165, and 378 each coordinate Zn(2+).

This sequence belongs to the peptidase M20A family. Zn(2+) serves as cofactor. Requires Co(2+) as cofactor.

The catalysed reaction is N-succinyl-(2S,6S)-2,6-diaminopimelate + H2O = (2S,6S)-2,6-diaminopimelate + succinate. It participates in amino-acid biosynthesis; L-lysine biosynthesis via DAP pathway; LL-2,6-diaminopimelate from (S)-tetrahydrodipicolinate (succinylase route): step 3/3. This is Probable succinyl-diaminopimelate desuccinylase (dapE) from Staphylococcus aureus (strain MRSA252).